The primary structure comprises 140 residues: Small ribosomal subunit protein uS19 (140 aa).

This sequence belongs to the universal ribosomal protein uS19 family.

Protein S19 forms a complex with S13 that binds strongly to the 16S ribosomal RNA. The polypeptide is Small ribosomal subunit protein uS19 (rps19) (Saccharolobus solfataricus (strain ATCC 35092 / DSM 1617 / JCM 11322 / P2) (Sulfolobus solfataricus)).